Consider the following 495-residue polypeptide: MLPVASLLILVPLIFAVVTFFTKTKQLAAGFGFLGSLATLGLTLYAYLNFDSSTAAMQFYESVSWIPFLGVNYSVGIDGVSMPLILLNAIVIPFMILFTWKEEMESPNRFYGLILTMQAAVIGVFVALDFVVFYIFWELTLVPLFFIVNLWGGANRAHASYKFFIYTHVASLVMLLGIFGLFYTALNQTGVPTFDIRELIAQFQFFEPGLMKDGIFLAILFGFLAKLPAFPFHSWLPDAYSEAPTAGSILFILLKIGGYGLFRISLPMLPNTGSPQLMIMILGLLGSVSILYGALLALRQKDLKRMIAYSSLSHMGYVILGSAGLVTLSVSGAMFQQFSHGLIMSIMFMSAGAIQTAAGTRIINELGGLAKKMPMLTVAMMVGFMASLGLPGLTGFIAEFLVLTFTFTNLPVFVVIALLAIVVTAGYHLWAMQRAMFGVYNEKLGDVRDINSIQVFSMAVIALLVLYFGLNPSPVLDMMINNSEAIVSLAAGMGV.

15 consecutive transmembrane segments (helical) span residues 1–21 (MLPV…VTFF), 27–47 (LAAG…LYAY), 57–77 (MQFY…SVGI), 80–100 (VSMP…LFTW), 108–128 (NRFY…FVAL), 130–150 (FVVF…IVNL), 163–183 (FFIY…GLFY), 215–235 (IFLA…FHSW), 249–269 (ILFI…LPML), 277–297 (LMIM…ALLA), 315–335 (MGYV…GAMF), 338–358 (FSHG…QTAA), 378–398 (VAMM…GFIA), 412–432 (VFVV…LWAM), and 450–470 (INSI…YFGL).

This sequence belongs to the complex I subunit 4 family. As to quaternary structure, the FPO complex is composed of at least 13 different subunits. FpoA, FpoH, FpoJ, FpoK, FpoL, FpoM and FpoN proteins constitute the membrane sector of the complex.

The protein resides in the cell membrane. It carries out the reaction methanophenazine + reduced coenzyme F420-(gamma-L-Glu)(n) = dihydromethanophenazine + oxidized coenzyme F420-(gamma-L-Glu)(n) + H(+). Functionally, component of the F(420)H(2) dehydrogenase (FPO complex) which is part of the energy-conserving F(420)H(2):heterodisulfide oxidoreductase system. The membrane-bound electron transfer system of the complex plays an important role in the metabolism of methylotrophic methanogens when the organisms grow on methanol or methylamines. Catalyzes the oxidation of methanophenazine to dihydromethanophenazine. It shuttles electrons from F(420)H(2), via FAD and iron-sulfur (Fe-S) centers, to methanophenazine (an electron carrier in the membrane). It couples the redox reaction to proton translocation (for every two electrons transferred, two hydrogen ions are translocated across the cytoplasmic membrane), and thus conserves the redox energy in a proton gradient. It also catalyzes the oxidation of F(420)H(2) with quinones such as 2,3-dimethyl-1,4-naphthoquinone, 2-methyl-1,4-naphthoquinone and tetramethyl-p-benzoquinone. The sequence is that of F(420)H(2) dehydrogenase subunit M (fpoM) from Methanosarcina mazei (strain ATCC BAA-159 / DSM 3647 / Goe1 / Go1 / JCM 11833 / OCM 88) (Methanosarcina frisia).